The chain runs to 185 residues: uncharacterized protein (185 aa).

An N-terminal signal peptide occupies residues 1 to 24 (MPCNRAVFGAFVLALLISLQSVYF). The chain crosses the membrane as a helical span at residues 50–70 (VAVNVIVEFSFDILFFLCGLL). A compositionally biased stretch (basic and acidic residues) spans 96-113 (ELEHVSSRRRNDSRDDST). Positions 96–185 (ELEHVSSRRR…LFTAGGIGLP (90 aa)) are disordered. A compositionally biased stretch (polar residues) spans 114 to 126 (VRNVSKTSPLASQ). Positions 127–138 (RSRDHFDGDPRE) are enriched in basic and acidic residues. Pro residues predominate over residues 139–155 (PAPPAYSPADFYPPPAS).

It is found in the host membrane. This is an uncharacterized protein from Colorado tick fever virus (strain USA/Florio N-7180) (CTFV).